The sequence spans 1103 residues: Trophozoite exported protein 1 (1103 aa).

Positions 173–212 (KKEKIEDKKYEQDDEEENEEEEEEEEEEEGEEENKEDEEF) form a coiled coil. Disordered regions lie at residues 178-210 (EDKK…KEDE) and 271-301 (KSYS…DNGK). Over residues 184–210 (QDDEEENEEEEEEEEEEEGEEENKEDE) the composition is skewed to acidic residues. A compositionally biased stretch (basic and acidic residues) spans 271–280 (KSYSGDEKIN). Coiled coils occupy residues 304 to 330 (DYVK…LECN) and 478 to 518 (YKNY…KLNN). A disordered region spans residues 544–601 (YFDEGENPYNRNNKNYRTDNKNSDDNNNNNNYYYNNYNSDDNYNSEDNEYNNGNYRFR). A compositionally biased stretch (low complexity) spans 568 to 585 (DNNNNNNYYYNNYNSDDN). Coiled-coil stretches lie at residues 650-791 (FRNL…LSGI), 819-932 (DEKY…IYKK), and 993-1030 (NKKL…NLSK). The RING-type zinc-finger motif lies at 1050-1089 (CSVCMENFRNYIIIKCGHIYCNNCIFNNLKTRNRKCPQCK).

The protein resides in the host cell membrane. The protein is Trophozoite exported protein 1 of Plasmodium falciparum (isolate 3D7).